Consider the following 75-residue polypeptide: Small ribosomal subunit protein bS18 (75 aa).

It belongs to the bacterial ribosomal protein bS18 family. As to quaternary structure, part of the 30S ribosomal subunit. Forms a tight heterodimer with protein bS6.

Binds as a heterodimer with protein bS6 to the central domain of the 16S rRNA, where it helps stabilize the platform of the 30S subunit. The polypeptide is Small ribosomal subunit protein bS18 (Psychromonas ingrahamii (strain DSM 17664 / CCUG 51855 / 37)).